A 783-amino-acid chain; its full sequence is Serine/threonine-protein kinase SIK1 (783 aa).

One can recognise a Protein kinase domain in the interval 27–278; the sequence is YDIERTLGKG…IAQIRQHRWM (252 aa). ATP contacts are provided by residues 33–41 and lysine 56; that span reads LGKGNFAVV. Catalysis depends on aspartate 149, which acts as the Proton acceptor. Threonine 182 is subject to Phosphothreonine; by LKB1 and GSK3-beta. A Phosphoserine; by autocatalysis modification is found at serine 186. In terms of domain architecture, UBA spans 303–343; that stretch reads DYDEQALGIMQTLGVDRQRTVESLQNSSYNHFAAIYYLLLE. At threonine 322 the chain carries Phosphothreonine; by CaMK1. Disordered stretches follow at residues 353–377 and 449–477; these read CARP…VPQE and RQGP…LAEV. Threonine 473 carries the phosphothreonine; by PKA modification. Residue serine 575 is modified to Phosphoserine; by PKA. Residues 583 to 612 form an RK-rich region; required for cAMP responsiveness and nuclear localization region; it reads LKAFRQQLRKTTRTKGFLGLNKIKGLARQV. Residues 619–643 are disordered; that stretch reads RASRGGLSPFHAPAQSPGLHGGAAG.

This sequence belongs to the protein kinase superfamily. CAMK Ser/Thr protein kinase family. AMPK subfamily. As to quaternary structure, interacts with ATP1A1. Interacts (when phosphorylated on Thr-182 and Ser-186) with YWHAZ. Interacts (when phosphorylated at Thr-473 and/or Ser-575) with 14-3-3 proteins; the interaction inhibits kinase activity towards TORCs. There is a cooperative effect of the phosphorylation sites in 14-3-3 binding as the interaction is stronger when both Thr-473 and Ser-575 are modified. The cofactor is Mg(2+). In terms of processing, phosphorylated at Thr-182 by STK11/LKB1 in complex with STE20-related adapter-alpha (STRADA) pseudo kinase and CAB39, leading to its activation. Phosphorylation at Thr-182 promotes autophosphorylation at Ser-186, which is required for sustained activity. Autophosphorylation at Ser-186 is maintained by sequential phosphorylation at Thr-182 by GSK3-beta. GSK3-beta cannot initiate phosphorylation at Thr-182, it can only maintain it. Phosphorylation at Ser-575 in response to cAMP signaling promotes translocation to the cytoplasm. Phosphorylation at Thr-322 by CaMK1 following intracellular sodium concentration leads to activation.

The protein resides in the cytoplasm. Its subcellular location is the nucleus. It carries out the reaction L-seryl-[protein] + ATP = O-phospho-L-seryl-[protein] + ADP + H(+). It catalyses the reaction L-threonyl-[protein] + ATP = O-phospho-L-threonyl-[protein] + ADP + H(+). Activated by phosphorylation on Thr-182. Also activated by phosphorylation on Thr-322 in response to increases in intracellular sodium in parallel with elevations in intracellular calcium through the reversible sodium/calcium exchanger. Inhibited by phosphorylation at Thr-473 and Ser-575, probably by PKA, which triggers interaction with 14-3-3 proteins. In terms of biological role, serine/threonine-protein kinase involved in various processes such as cell cycle regulation, gluconeogenesis and lipogenesis regulation, muscle growth and differentiation and tumor suppression. Phosphorylates HDAC4, HDAC5, PPME1, SREBF1, CRTC1/TORC1. Inhibits CREB activity by phosphorylating and inhibiting activity of TORCs, the CREB-specific coactivators, like CRTC2/TORC2 and CRTC3/TORC3 in response to cAMP signaling. Acts as a tumor suppressor and plays a key role in p53/TP53-dependent anoikis, a type of apoptosis triggered by cell detachment: required for phosphorylation of p53/TP53 in response to loss of adhesion and is able to suppress metastasis. Part of a sodium-sensing signaling network, probably by mediating phosphorylation of PPME1: following increases in intracellular sodium, SIK1 is activated by CaMK1 and phosphorylates PPME1 subunit of protein phosphatase 2A (PP2A), leading to dephosphorylation of sodium/potassium-transporting ATPase ATP1A1 and subsequent increase activity of ATP1A1. Acts as a regulator of muscle cells by phosphorylating and inhibiting class II histone deacetylases HDAC4 and HDAC5, leading to promote expression of MEF2 target genes in myocytes. Also required during cardiomyogenesis by regulating the exit of cardiomyoblasts from the cell cycle via down-regulation of CDKN1C/p57Kip2. Acts as a regulator of hepatic gluconeogenesis by phosphorylating and repressing the CREB-specific coactivators CRTC1/TORC1 and CRTC2/TORC2, leading to inhibit CREB activity. Also regulates hepatic lipogenesis by phosphorylating and inhibiting SREBF1. In concert with CRTC1/TORC1, regulates the light-induced entrainment of the circadian clock by attenuating PER1 induction; represses CREB-mediated transcription of PER1 by phosphorylating and deactivating CRTC1/TORC1. In Homo sapiens (Human), this protein is Serine/threonine-protein kinase SIK1 (SIK1).